Here is a 248-residue protein sequence, read N- to C-terminus: 14-3-3 protein gamma-2 (248 aa).

The protein belongs to the 14-3-3 family. In terms of assembly, homodimer, and heterodimer with other family members. Expressed in brain, gill, heart, intestine, kidney, liver, ovary, skeletal muscle, spleen and testis.

It is found in the cytoplasm. Its function is as follows. Adapter protein implicated in the regulation of a large spectrum of both general and specialized signaling pathways. Binds to a large number of partners, usually by recognition of a phosphoserine or phosphothreonine motif. Binding generally results in the modulation of the activity of the binding partner. The chain is 14-3-3 protein gamma-2 from Oncorhynchus mykiss (Rainbow trout).